We begin with the raw amino-acid sequence, 179 residues long: Ribosome maturation factor RimM (179 aa).

The PRC barrel domain occupies 97–170; that stretch reads DGELSWNFFV…LITVELPEGL (74 aa).

It belongs to the RimM family. As to quaternary structure, binds ribosomal protein uS19.

It is found in the cytoplasm. Functionally, an accessory protein needed during the final step in the assembly of 30S ribosomal subunit, possibly for assembly of the head region. Essential for efficient processing of 16S rRNA. May be needed both before and after RbfA during the maturation of 16S rRNA. It has affinity for free ribosomal 30S subunits but not for 70S ribosomes. This Bacteroides thetaiotaomicron (strain ATCC 29148 / DSM 2079 / JCM 5827 / CCUG 10774 / NCTC 10582 / VPI-5482 / E50) protein is Ribosome maturation factor RimM.